The following is a 639-amino-acid chain: Zinc finger protein ZIC 5 (639 aa).

4 disordered regions span residues 113–171, 189–251, 323–355, and 379–409; these read PCGG…GHSR, HGAP…GHPH, PGPHLQHHAPPPAPPPPPAPAQHPHQHHPHLPG, and PDELAGLPPPPPPPPPPPPPPPAGGAKPCSK. Pro residues predominate over residues 124–150; that stretch reads SAPPPPAPPLPPTPSPPPPPPPPPPPA. 2 stretches are compositionally biased toward pro residues: residues 331-343 and 385-401; these read APPPAPPPPPAPA and LPPPPPPPPPPPPPPPA. Residues 434–461 form a C2H2-type 1; atypical zinc finger; that stretch reads HVCFWEDCPREGKPFKAKYKLINHIRVH. 3 consecutive C2H2-type zinc fingers follow at residues 467 to 491, 497 to 521, and 527 to 551; these read FPCPFPGCGKVFARSENLKIHKRTH, FKCEFDGCDRKFANSSDRKKHSHVH, and YYCKIRGCDKSYTHPSSLRKHMKIH. Residues 548–568 form a disordered region; sequence MKIHCKSPPPSPGPLGYSSVG. Residues S554, S558, and S576 each carry the phosphoserine modification. Residues 607 to 639 are disordered; the sequence is APSHLHTPSSNGTTSETEDEEIYGNPEVVRTIH. Positions 612–621 are enriched in polar residues; sequence HTPSSNGTTS.

It belongs to the GLI C2H2-type zinc-finger protein family.

The protein resides in the nucleus. Functionally, essential for neural crest development, converting cells from an epidermal fate to a neural crest cell fate. Binds to DNA. This is Zinc finger protein ZIC 5 (ZIC5) from Homo sapiens (Human).